The primary structure comprises 519 residues: Phosphate acetyltransferase (519 aa).

The segment at 196–519 is phosphate acetyltransferase; that stretch reads AFQRSLEKKA…LISAIQAQDY (324 aa).

In the N-terminal section; belongs to the CobB/CobQ family. The protein in the C-terminal section; belongs to the phosphate acetyltransferase and butyryltransferase family.

The protein localises to the cytoplasm. It catalyses the reaction acetyl-CoA + phosphate = acetyl phosphate + CoA. It participates in metabolic intermediate biosynthesis; acetyl-CoA biosynthesis; acetyl-CoA from acetate: step 2/2. This is Phosphate acetyltransferase (pta) from Helicobacter pylori (strain J99 / ATCC 700824) (Campylobacter pylori J99).